A 543-amino-acid chain; its full sequence is CTP synthase (543 aa).

The amidoligase domain stretch occupies residues 1-265 (MARYIFITGG…DDEVLAAFGI (265 aa)). Ser13 contributes to the CTP binding site. Ser13 contributes to the UTP binding site. An ATP-binding site is contributed by 14 to 19 (SLGKGL). An L-glutamine-binding site is contributed by Tyr54. Asp71 provides a ligand contact to ATP. Residues Asp71 and Glu139 each contribute to the Mg(2+) site. CTP contacts are provided by residues 146-148 (DIE), 186-191 (KTKPTQ), and Lys222. UTP contacts are provided by residues 186–191 (KTKPTQ) and Lys222. Position 238–240 (238–240 (RDV)) interacts with ATP. The region spanning 291 to 542 (TIAIVGKYTG…VQAAVVQSRL (252 aa)) is the Glutamine amidotransferase type-1 domain. Residue Gly353 participates in L-glutamine binding. Cys380 functions as the Nucleophile; for glutamine hydrolysis in the catalytic mechanism. Residues 381–384 (FGMQ), Glu404, and Arg470 each bind L-glutamine. Active-site residues include His515 and Glu517.

Belongs to the CTP synthase family. As to quaternary structure, homotetramer.

The catalysed reaction is UTP + L-glutamine + ATP + H2O = CTP + L-glutamate + ADP + phosphate + 2 H(+). The enzyme catalyses L-glutamine + H2O = L-glutamate + NH4(+). It catalyses the reaction UTP + NH4(+) + ATP = CTP + ADP + phosphate + 2 H(+). It functions in the pathway pyrimidine metabolism; CTP biosynthesis via de novo pathway; CTP from UDP: step 2/2. Its activity is regulated as follows. Allosterically activated by GTP, when glutamine is the substrate; GTP has no effect on the reaction when ammonia is the substrate. The allosteric effector GTP functions by stabilizing the protein conformation that binds the tetrahedral intermediate(s) formed during glutamine hydrolysis. Inhibited by the product CTP, via allosteric rather than competitive inhibition. Catalyzes the ATP-dependent amination of UTP to CTP with either L-glutamine or ammonia as the source of nitrogen. Regulates intracellular CTP levels through interactions with the four ribonucleotide triphosphates. The chain is CTP synthase from Rhodopseudomonas palustris (strain BisB18).